The following is a 1088-amino-acid chain: MERSPEEGAGPEPSGQSPATDSTRERDGGSGVPPAGPGAASEALAVLTSFGRRLLVLVPVYLAGAAGLSVGFVLFGLALYLGWRRVRDGKERSLRAARQLLDDEERITAETLYMSHRELPAWVSFPDVEKAEWLNKIVVQVWPFLGQYMEKLLAETVAPAVRGANPHLQTFTFTRVELGEKPVRIIGVKVHPSQRKDQILLDLNVSYVGDLQIDVEVKKYFCKAGVKGMQLHGVLRVILEPLIGDLPIVGAVSMFFIKRPTLDINWTGMTNLLDIPGLSSLSDTMIMDSIAAFLVLPNRLLVPLVPDLQDVAQLRSPLPRGIIRIHLLAARGLSSKDKYVKGLIEGKSDPYALVRVGTQTFCSRVIDEELNPHWGETYEVIVHEVPGQEIEVEVFDKDPDKDDFLGRMKLDVGKVLQAGVLDNWYPLQGGQGQVHLRLEWLSLLPDAEKLDQVLQWNRGITSRPEPPSAAILVVYLDRAQDLPLKKGNKEPNPMVQLSVQDVTQESKATYSTNCPVWEEAFRFFLQDPRSQELDVQVKDDSRALTLGALTLPLARLLTASELTLDQWFQLSSSGPNSRLYMKLVMRILYLDSSEMRLPTEPGAQDWDSESPETGSSVDAPPRPYHTTPNSHFGTENVLRIHVLEAQDLIAKDRFLGGLVKGKSDPYVKLKVAGRSLRTHVVREDLNPRWNEVFEVIVTSIPGQELDIEVFDKDLDKDDFLGRYKVGLTTVLNSGFLDEWLTLEDVPSGRLHLRLERLSPRPTAAELEEVLQVNSLIQTQKSSELAAALLSVYLERSEDLPLRKGTKPPSPYAILTVGETSHKTKTVSQTSAPIWEESASFLIRKPHAESLELQVRGEGTGTLGSISLPLSELLQEEQLCLDRWFALSGQGQVLMRVQLGILVSQHSGVEAHSHSSSSLNEEPEVLGDPTHTASPVLEVRHRLTHGDSPSEALIGPLGQVKLTVWYHSDEQKLISIIHSCRALRQNGRDLPDPYVSVLLLPDKNRGTKRKTSQKKRTLNPEFNERFEWDLPLDGTLRRKLDVSVKSNSSFMSRERELLGKVQLDLAEIDLSQGAAQWYDLIDDRDKGGS.

M1 carries the post-translational modification N-acetylmethionine. Residues M1–S30 are Cytoplasmic-facing. Positions M1 to G38 are disordered. A helical transmembrane segment spans residues G31–G51. The Lumenal segment spans residues R52–L54. A helical membrane pass occupies residues L55–F75. Over G76 to S1088 the chain is Cytoplasmic. The 179-residue stretch at D127–V305 folds into the SMP-LTD domain. C2 domains lie at L304–Y425, D446–S572, D618–L740, and Q771–G888. Residue S316 is modified to Phosphoserine; by CDK5. Residues K336, D337, D349, D396, D398, D400, D402, and D403 each coordinate Ca(2+). The tract at residues T599–S630 is disordered. K806 carries the N6-acetyllysine modification. Position 809 is a phosphoserine (S809). Positions H911–H930 are disordered. Residues S933 and S947 each carry the phosphoserine modification. The 123-residue stretch at P955–Y1077 folds into the C2 5 domain. A Phosphotyrosine modification is found at Y993. The required for phosphatidylinositol 4,5-bisphosphate-dependent location at the cell membrane stretch occupies residues K1002 to K1009.

The protein belongs to the extended synaptotagmin family. Interacts with ESYT2 and ESYT3. Interacts with ADGRD1; inhibiting the G-protein-coupled receptor activity of ADGRD1. Interaction with ADGRD1 is abolished when cytosolic calcium increases, relieving ADGRD1 G-protein-coupled receptor activity. Interacts (phosphorylated form) with SLC2A4. Post-translationally, phosphorylated on Ser residues in insulin-treated adipocytes (in vitro); this promotes interaction with SLC2A4. Ubiquitously expressed with a higher expression in spleen and white adipose tissue.

The protein localises to the endoplasmic reticulum membrane. It localises to the cell membrane. In terms of biological role, binds calcium (via the C2 domains) and translocates to sites of contact between the endoplasmic reticulum and the cell membrane in response to increased cytosolic calcium levels. Helps tether the endoplasmic reticulum to the cell membrane and promotes the formation of appositions between the endoplasmic reticulum and the cell membrane. Acts as an inhibitor of ADGRD1 G-protein-coupled receptor activity in absence of cytosolic calcium. Binds glycerophospholipids in a barrel-like domain and may play a role in cellular lipid transport. The protein is Extended synaptotagmin-1 (Esyt1) of Rattus norvegicus (Rat).